Reading from the N-terminus, the 329-residue chain is Deoxynucleotidyltransferase terminal-interacting protein 1 (329 aa).

Disordered regions lie at residues 1 to 22 (MGATGDAEQPRGPSGAERGGLE) and 147 to 178 (KRGRQAEEECAHRGSPLPKKRKGRPPGHILSS). The interval 56-147 (MTTSFTDPAI…RLTHELPGIK (92 aa)) is important for dimerization. The span at 147-158 (KRGRQAEEECAH) shows a compositional bias: basic and acidic residues. The a.T hook DNA-binding region spans 159-173 (RGSPLPKKRKGRPPG). Ser161 bears the Phosphoserine mark. Residues 164 to 170 (PKKRKGR) carry the Nuclear localization signal motif. An important for DNA and nucleosome binding region spans residues 197 to 316 (REGPKWDPAR…MRKYMETLRT (120 aa)). The segment at residues 216–237 (GSRANKALGMGGTRGRIYIKHP) is a DNA-binding region (H-T-H motif).

Monomer and homodimer. A minor proportion may form homotrimers. Interacts with ZNF541. Interacts with the terminal deoxynucleotidyltransferase DNTT. Interacts with TRERF1. Identified in a histone deacetylase complex that contains DNTTIP1, HDAC1 and MIDEAS; this complex assembles into a tetramer that contains four copies of each protein chain. Component of a histone deacetylase complex containing DNTTIP1, ZNF541, HDAC1 and HDAC2. Identified in a complex with KCTD19, HDAC1, HDAC2 and ZNF541.

Its subcellular location is the nucleus. In terms of biological role, increases DNTT terminal deoxynucleotidyltransferase activity (in vitro). Also acts as a transcriptional regulator, binding to the consensus sequence 5'-GNTGCATG-3' following an AT-tract. Associates with RAB20 promoter and positively regulates its transcription. Binds DNA and nucleosomes; may recruit HDAC1 complexes to nucleosomes or naked DNA. The protein is Deoxynucleotidyltransferase terminal-interacting protein 1 (DNTTIP1) of Homo sapiens (Human).